Reading from the N-terminus, the 339-residue chain is DNA repair protein RAD51 homolog 1 (339 aa).

The interval 1–22 is disordered; the sequence is MAMQMQLEASADTSVEEESFGP. Position 2 is an N-acetylalanine (Ala2). Thr13 is subject to Phosphothreonine. Position 14 is a phosphoserine (Ser14). The 30-residue stretch at 48-77 folds into the HhH domain; the sequence is TVEAVAYAPKKELINIKGISEAKADKILTE. The residue at position 54 (Tyr54) is a Phosphotyrosine; by ABL1. Glycyl lysine isopeptide (Lys-Gly) (interchain with G-Cter in ubiquitin) cross-links involve residues Lys58 and Lys64. 127–134 contributes to the ATP binding site; the sequence is GEFRTGKT. The interval 184 to 257 is interaction with PALB2; sequence DVLDNVAYAR…FLRMLLRLAD (74 aa). A Nuclear export signal; masked by the interaction with BRCA2 motif is present at residues 245-260; it reads LARFLRMLLRLADEFG. Thr309 is subject to Phosphothreonine; by CHEK1.

This sequence belongs to the RecA family. RAD51 subfamily. Forms linear homooligomers, giving rise to a RAD51 nucleoprotein filament, which is essential for strand-pairing reactions during DNA recombination. Interacts with BRCA1 and either directly or indirectly with p53. Interacts with XRCC3, RAD54L and RAD54B. Interacts with the BCDX2 subcomplex RAD51C:RAD51B. Component of the homologous recombination repair (HR) complex composed of ERCC5/XPG, BRCA2, PALB2, DSS1 and RAD51. Interacts directly with PALB2 which may serve as a scaffold for a HR complex containing PALB2, BRCA2, RAD51C, RAD51 and XRCC3. Interacts with RAD51AP1 and RAD51AP2. Interacts with CHEK1, and this may require prior phosphorylation of CHEK1. Interacts with the MND1-PSMC3IP heterodimer. Found in a complex, at least composed of BLM, RAD51 and SPIDR; the complex formation is mediated by SPIDR. Interacts with SPIDR; the interaction is direct and recruits RAD51 to DNA damage sites. Interacts with FIGNL1 (via N-terminal one-half region); the interaction is direct. Interacts with RAD51AP1 (via C-terminal region); the interaction is direct. Interacts with NABP2, RPA1, PALB2 and RAD51. Interacts with SWI5/C9orf119, and at lower level with SFR1/MEIR5. Interacts with hyperphosphorylated RPA2; this interaction is necessary for efficient recruitment to chromatin in response to DNA damage. Interacts with SWSAP1; involved in homologous recombination repair. Interacts with PARPBP, BRCA2 and RECQL5; these interactions interfere with the formation of the RAD51-DNA homologous recombination structure. Interacts with POLQ; POLQ acts as an inhibitor of homology-recombination repair (HR) pathway by limiting RAD51 accumulation at resected ends. Interacts with POLN. Interacts with FBH1. Interacts with RFWD3. Interacts with the MCM8-MCM9 complex; the interaction recruits RAD51 to DNA damage sites. Component of a multiprotein complex with MEIOB and SPATA22. Interacts with the complex BRME1:HSF2BP:BRCA2. Interacts with HELQ; stimulating HELQ DNA helicase activity and ability to unwing DNA. Interacts with MMS22L; the interaction is direct and promotes recruitment of RAD51 to sites of DNA damage. Interacts with the ATAD5 RFC-like complex. Within the ATAD5 RFC-like complex, interacts with ATAD5 (via N-terminus); the interaction is direct and enhanced under replication stress. Interacts with WDR48; the interaction is enhanced under replication stress. Interacts with DNA helicase ZGRF1; the interaction promotes RAD51 strand exchange activity. Interacts (when phosphorylated) with TOPBP1; interaction takes place following phosphorylation by CK2 and PLK1 and promotes recruitment to DNA damage sites. Interacts with GRB2; this interaction inhibits RAD51 ATPase activity to stabilize RAD51 on stalled replication forks. In terms of processing, ubiquitinated by the SCF(FBH1) E3 ubiquitin ligase complex, regulating RAD51 subcellular location and preventing its association with DNA. Ubiquitinated by RFWD3 in response to DNA damage: ubiquitination leads to degradation by the proteasome, promoting homologous recombination. Post-translationally, phosphorylation of Thr-309 by CHEK1 may enhance association with chromatin at sites of DNA damage and promote DNA repair by homologous recombination. Phosphorylated at Ser-14 by PLK1, triggering phosphorylation at Thr-13 by CK2, thereby promoting interaction with TOPBP1 and recruitment to DNA damage sites during S-phase. Phosphorylation by ABL1 inhibits function. Expressed in the testes (at protein level). Expressed in the brain (at protein level). Expressed in the thymus, spleen, ovary and small intestine.

The protein resides in the nucleus. Its subcellular location is the cytoplasm. It localises to the perinuclear region. It is found in the mitochondrion matrix. The protein localises to the chromosome. The protein resides in the cytoskeleton. Its subcellular location is the microtubule organizing center. It localises to the centrosome. Its function is as follows. Plays an important role in homologous strand exchange, a key step in DNA repair through homologous recombination (HR). Binds to single-stranded DNA in an ATP-dependent manner to form nucleoprotein filaments which are essential for the homology search and strand exchange. Catalyzes the recognition of homology and strand exchange between homologous DNA partners to form a joint molecule between a processed DNA break and the repair template. Recruited to resolve stalled replication forks during replication stress. Part of a PALB2-scaffolded HR complex containing BRCA2 and RAD51C and which is thought to play a role in DNA repair by HR. Plays a role in regulating mitochondrial DNA copy number under conditions of oxidative stress in the presence of RAD51C and XRCC3. Also involved in interstrand cross-link repair. The polypeptide is DNA repair protein RAD51 homolog 1 (Mus musculus (Mouse)).